A 299-amino-acid polypeptide reads, in one-letter code: Oxygen-dependent coproporphyrinogen-III oxidase (299 aa).

Ser92 contributes to the substrate binding site. His96 and His106 together coordinate a divalent metal cation. The Proton donor role is filled by His106. 108 to 110 (NVR) is a binding site for substrate. A divalent metal cation-binding residues include His145 and His175. The tract at residues 239–274 (YVEFNLVYDRGTLFGLQSGGRAESILMSLPPQVRWE) is important for dimerization. 257–259 (GGR) contributes to the substrate binding site.

This sequence belongs to the aerobic coproporphyrinogen-III oxidase family. In terms of assembly, homodimer. It depends on a divalent metal cation as a cofactor.

Its subcellular location is the cytoplasm. It carries out the reaction coproporphyrinogen III + O2 + 2 H(+) = protoporphyrinogen IX + 2 CO2 + 2 H2O. Its pathway is porphyrin-containing compound metabolism; protoporphyrin-IX biosynthesis; protoporphyrinogen-IX from coproporphyrinogen-III (O2 route): step 1/1. In terms of biological role, involved in the heme biosynthesis. Catalyzes the aerobic oxidative decarboxylation of propionate groups of rings A and B of coproporphyrinogen-III to yield the vinyl groups in protoporphyrinogen-IX. This chain is Oxygen-dependent coproporphyrinogen-III oxidase, found in Xanthomonas campestris pv. campestris (strain 8004).